The following is a 217-amino-acid chain: Uracil-DNA glycosylase (217 aa).

D62 functions as the Proton acceptor in the catalytic mechanism.

This sequence belongs to the uracil-DNA glycosylase (UDG) superfamily. UNG family.

It is found in the cytoplasm. The catalysed reaction is Hydrolyzes single-stranded DNA or mismatched double-stranded DNA and polynucleotides, releasing free uracil.. Functionally, excises uracil residues from the DNA which can arise as a result of misincorporation of dUMP residues by DNA polymerase or due to deamination of cytosine. The sequence is that of Uracil-DNA glycosylase from Streptococcus gordonii (strain Challis / ATCC 35105 / BCRC 15272 / CH1 / DL1 / V288).